The primary structure comprises 439 residues: Arginine biosynthesis bifunctional protein ArgJ, mitochondrial (439 aa).

Substrate contacts are provided by T175, K201, T212, E301, N434, and S439. T212 serves as the catalytic Nucleophile.

It belongs to the ArgJ family. Heterodimer of an alpha and a beta chain. In terms of processing, the alpha and beta chains are autoproteolytically processed from a single precursor protein within the mitochondrion.

It is found in the mitochondrion matrix. The enzyme catalyses N(2)-acetyl-L-ornithine + L-glutamate = N-acetyl-L-glutamate + L-ornithine. It carries out the reaction L-glutamate + acetyl-CoA = N-acetyl-L-glutamate + CoA + H(+). The protein operates within amino-acid biosynthesis; L-arginine biosynthesis; L-ornithine and N-acetyl-L-glutamate from L-glutamate and N(2)-acetyl-L-ornithine (cyclic): step 1/1. Its pathway is amino-acid biosynthesis; L-arginine biosynthesis; N(2)-acetyl-L-ornithine from L-glutamate: step 1/4. Catalyzes two activities which are involved in the cyclic version of arginine biosynthesis: the synthesis of acetylglutamate from glutamate and acetyl-CoA, and of ornithine by transacetylation between acetylornithine and glutamate. In Candida albicans (strain SC5314 / ATCC MYA-2876) (Yeast), this protein is Arginine biosynthesis bifunctional protein ArgJ, mitochondrial (ECM42).